We begin with the raw amino-acid sequence, 389 residues long: MDLFEYQAKELFAKHEVPTSAGRVTDTVAGAREIAEEIGKPVMVKAQVKVGGRGKAGGVKYSADVDAAQANAEAILGLDIKGHVVKKLLVAEASDIAEEYYISFLLDRTNRTYLAMCSVEGGVEIEVTAEENPDALAKIPVDAVKGVDLAFARSIAEAGKLPAEVLDAAAVTIQKLWEVFIKEDALLVEVNPLVRTPNDEILALDGKVTLDENAAFRQPGHEAFEDKDATDPLELKAKENDLNYVKLDGEVGIIGNGAGLVMSTLDVVAYAGEKHGGVKPANFLDIGGGASAEVMANGLDVILNDAQVKSVFVNVFGGITACDAVANGIVGALKTLGDEANKPLVVRLDGNNVEEGRRILAEAAHPLVTVVGTMDEAADKAAELAFAAK.

The 228-residue stretch at 9-236 folds into the ATP-grasp domain; the sequence is KELFAKHEVP…KDATDPLELK (228 aa). ATP-binding positions include Lys45, 52-54, Ser94, and Glu99; that span reads GRG. Positions 191 and 205 each coordinate Mg(2+). Residues Asn256 and 318–320 contribute to the substrate site; that span reads GIT.

The protein belongs to the succinate/malate CoA ligase beta subunit family. In terms of assembly, heterotetramer of two alpha and two beta subunits. The cofactor is Mg(2+).

The catalysed reaction is succinate + ATP + CoA = succinyl-CoA + ADP + phosphate. The enzyme catalyses GTP + succinate + CoA = succinyl-CoA + GDP + phosphate. Its pathway is carbohydrate metabolism; tricarboxylic acid cycle; succinate from succinyl-CoA (ligase route): step 1/1. Its function is as follows. Succinyl-CoA synthetase functions in the citric acid cycle (TCA), coupling the hydrolysis of succinyl-CoA to the synthesis of either ATP or GTP and thus represents the only step of substrate-level phosphorylation in the TCA. The beta subunit provides nucleotide specificity of the enzyme and binds the substrate succinate, while the binding sites for coenzyme A and phosphate are found in the alpha subunit. The polypeptide is Succinate--CoA ligase [ADP-forming] subunit beta (Rhodococcus opacus (strain B4)).